Consider the following 48-residue polypeptide: uncharacterized protein (48 aa).

A disordered region spans residues 1–30 (MLGRTKLGNRNAQANNNAKKKNGFQTHFDS).

This is an uncharacterized protein from Bacillus subtilis (strain 168).